We begin with the raw amino-acid sequence, 333 residues long: tRNA N6-adenosine threonylcarbamoyltransferase (333 aa).

Positions 111 and 115 each coordinate Fe cation. Substrate contacts are provided by residues 134–138 (LASGG), D167, G180, and N273. Fe cation is bound at residue D301.

It belongs to the KAE1 / TsaD family. Requires Fe(2+) as cofactor.

It localises to the cytoplasm. It catalyses the reaction L-threonylcarbamoyladenylate + adenosine(37) in tRNA = N(6)-L-threonylcarbamoyladenosine(37) in tRNA + AMP + H(+). Functionally, required for the formation of a threonylcarbamoyl group on adenosine at position 37 (t(6)A37) in tRNAs that read codons beginning with adenine. Is involved in the transfer of the threonylcarbamoyl moiety of threonylcarbamoyl-AMP (TC-AMP) to the N6 group of A37, together with TsaE and TsaB. TsaD likely plays a direct catalytic role in this reaction. The chain is tRNA N6-adenosine threonylcarbamoyltransferase from Desulforapulum autotrophicum (strain ATCC 43914 / DSM 3382 / VKM B-1955 / HRM2) (Desulfobacterium autotrophicum).